Consider the following 31-residue polypeptide: Cytochrome b6-f complex subunit 6 (31 aa).

A helical membrane pass occupies residues 3 to 23 (ILIGYIILLACAFGLAAGLFF).

Belongs to the PetL family. As to quaternary structure, the 4 large subunits of the cytochrome b6-f complex are cytochrome b6, subunit IV (17 kDa polypeptide, PetD), cytochrome f and the Rieske protein, while the 4 small subunits are PetG, PetL, PetM and PetN. The complex functions as a dimer.

It is found in the plastid. The protein resides in the chloroplast thylakoid membrane. Its function is as follows. Component of the cytochrome b6-f complex, which mediates electron transfer between photosystem II (PSII) and photosystem I (PSI), cyclic electron flow around PSI, and state transitions. PetL is important for photoautotrophic growth as well as for electron transfer efficiency and stability of the cytochrome b6-f complex. In Rhodomonas salina (Cryptomonas salina), this protein is Cytochrome b6-f complex subunit 6.